The chain runs to 145 residues: DNA polymerase epsilon subunit 3 (145 aa).

A2 is subject to N-acetylalanine. At T83 the chain carries Phosphothreonine. Residues 85–144 (LKEALEAYRREQKGKKEASEQKKKDKDKKDCEEQDKSREEEDEDEERLDEEEQNEEEEVD) are a coiled coil. The segment covering 93 to 123 (RREQKGKKEASEQKKKDKDKKDCEEQDKSRE) has biased composition (basic and acidic residues). The disordered stretch occupies residues 93–145 (RREQKGKKEASEQKKKDKDKKDCEEQDKSREEEDEDEERLDEEEQNEEEEVDN). Residue S121 is modified to Phosphoserine. Residues 124–145 (EEDEDEERLDEEEQNEEEEVDN) are compositionally biased toward acidic residues.

Component of the DNA polymerase epsilon complex consisting of four subunits: the catalytic subunit POLE and the accessory subunits POLE2, POLE3 and POLE4. Interaction with POLE4 is a prerequisite for further binding with POLE and POLE2. Heterodimer with CHRAC1; binds to DNA. Component of the CHRAC ISWI chromatin remodeling complex at least composed of SMARCA5/SNF2H, BAZ1A/ACF1, CHRAC1 and POLE3; the complex preferentially binds DNA through the CHRAC1-POLE3 heterodimer and possesses ATP-dependent nucleosome-remodeling activity. Within the complex, the heterodimer with CHRAC1 interacts with SMARCA5/SNF2H; the interaction is direct and enhances nucleosome sliding activity by the SMARCA5/SNF2H and BAZ1A/ACF1 interaction. Within the complex, the heterodimer with CHRAC1 interacts with BAZ1A/ACF1; the interactions are direct.

The protein localises to the nucleus. In terms of biological role, accessory component of the DNA polymerase epsilon complex. Participates in DNA repair and in chromosomal DNA replication. Forms a complex with CHRAC1 and binds naked DNA, which is then incorporated into chromatin, aided by the nucleosome-remodeling activity of ISWI/SNF2H and ACF1. Does not enhance nucleosome sliding activity of the ACF-5 ISWI chromatin remodeling complex. In Rattus norvegicus (Rat), this protein is DNA polymerase epsilon subunit 3 (Pole3).